We begin with the raw amino-acid sequence, 455 residues long: Argininosuccinate lyase (455 aa).

The protein belongs to the lyase 1 family. Argininosuccinate lyase subfamily.

Its subcellular location is the cytoplasm. It catalyses the reaction 2-(N(omega)-L-arginino)succinate = fumarate + L-arginine. It participates in amino-acid biosynthesis; L-arginine biosynthesis; L-arginine from L-ornithine and carbamoyl phosphate: step 3/3. The chain is Argininosuccinate lyase from Caulobacter sp. (strain K31).